A 277-amino-acid polypeptide reads, in one-letter code: tRNA U34 carboxymethyltransferase (277 aa).

Residues lysine 46, tryptophan 60, lysine 65, glycine 84, 106–108 (DPS), 133–134 (VE), tyrosine 153, and arginine 268 contribute to the carboxy-S-adenosyl-L-methionine site.

Belongs to the class I-like SAM-binding methyltransferase superfamily. CmoB family. As to quaternary structure, homotetramer.

It catalyses the reaction carboxy-S-adenosyl-L-methionine + 5-hydroxyuridine(34) in tRNA = 5-carboxymethoxyuridine(34) in tRNA + S-adenosyl-L-homocysteine + H(+). In terms of biological role, catalyzes carboxymethyl transfer from carboxy-S-adenosyl-L-methionine (Cx-SAM) to 5-hydroxyuridine (ho5U) to form 5-carboxymethoxyuridine (cmo5U) at position 34 in tRNAs. The chain is tRNA U34 carboxymethyltransferase from Wolinella succinogenes (strain ATCC 29543 / DSM 1740 / CCUG 13145 / JCM 31913 / LMG 7466 / NCTC 11488 / FDC 602W) (Vibrio succinogenes).